A 655-amino-acid chain; its full sequence is T-lymphocyte surface antigen Ly-9 (655 aa).

A signal peptide spans 1-47; that stretch reads MVAPKSHTDDWAPGPFSSKPQRSQLQIFSSVLQTSLLFLLMGLRASG. The 111-residue stretch at 48 to 158 folds into the Ig-like V-type 1 domain; it reads KDSAPTVVSG…FVYEQLQEPQ (111 aa). Over 48–454 the chain is Extracellular; the sequence is KDSAPTVVSG…ICSGPERNTK (407 aa). N-linked (GlcNAc...) asparagine glycans are attached at residues asparagine 68, asparagine 95, asparagine 120, asparagine 169, and asparagine 173. One can recognise an Ig-like C2-type 1 domain in the interval 159-235; sequence VTMKSVKVSE…NPVSQRSSLP (77 aa). Cystine bridges form between cysteine 172–cysteine 242 and cysteine 178–cysteine 222. One can recognise an Ig-like V-type 2 domain in the interval 251-363; it reads GTTGETVVGV…LLIYRRLRKP (113 aa). N-linked (GlcNAc...) asparagine glycans are attached at residues asparagine 285, asparagine 413, and asparagine 424. The 89-residue stretch at 364–452 folds into the Ig-like C2-type 2 domain; the sequence is KITWSLRHSE…ENICSGPERN (89 aa). 2 disulfides stabilise this stretch: cysteine 377–cysteine 446 and cysteine 383–cysteine 427. A helical transmembrane segment spans residues 455 to 476; sequence LWIGLFLMVCLLCVGIFSWCIW. The Cytoplasmic portion of the chain corresponds to 477–655; it reads KRKGRCSVPA…PESPTYENFT (179 aa). A disordered region spans residues 521-556; sequence PLRPARQQPTPTSDSSSDSNLTTEEDEDRPEVHKPI. Positions 530-542 are enriched in low complexity; that stretch reads TPTSDSSSDSNLT. 2 short sequence motifs (ITSM) span residues 601 to 606 and 624 to 629; these read TMYAQV and TIYCSI. A Phosphotyrosine modification is found at tyrosine 603. The disordered stretch occupies residues 633 to 655; it reads QVVPPPQQNDLEIPESPTYENFT.

Interacts with SH2D1A, SH2D1B and INPP5D. Interacts (via phosphorylated cytoplasmic domain) with PTPN11; the interaction is blocked by SH2D1A. Increased surface expression on T-cells of systemic lupus erythematosus (SLE) patients.

The protein localises to the membrane. The protein resides in the cell membrane. Its function is as follows. Self-ligand receptor of the signaling lymphocytic activation molecule (SLAM) family. SLAM receptors triggered by homo- or heterotypic cell-cell interactions are modulating the activation and differentiation of a wide variety of immune cells and thus are involved in the regulation and interconnection of both innate and adaptive immune response. Activities are controlled by presence or absence of small cytoplasmic adapter proteins, SH2D1A/SAP and/or SH2D1B/EAT-2. May participate in adhesion reactions between T lymphocytes and accessory cells by homophilic interaction. Promotes T-cell differentiation into a helper T-cell Th17 phenotype leading to increased IL-17 secretion; the costimulatory activity requires SH2D1A. Promotes recruitment of RORC to the IL-17 promoter. May be involved in the maintenance of peripheral cell tolerance by serving as a negative regulator of the immune response. May disable autoantibody responses and inhibit IFN-gamma secretion by CD4(+) T-cells. May negatively regulate the size of thymic innate CD8(+) T-cells and the development of invariant natural killer T (iNKT) cells. This is T-lymphocyte surface antigen Ly-9 (LY9) from Homo sapiens (Human).